The following is a 100-amino-acid chain: Non-histone chromosomal protein HMG-14 (100 aa).

A disordered region spans residues 1-100; the sequence is MPKRKVSSAE…EAGEKEAKSD (100 aa). Ser-7 carries the post-translational modification ADP-ribosylserine. Residue Ser-8 is modified to Phosphoserine. Lys-14 bears the N6-acetyllysine mark. At Ser-21 the chain carries Phosphoserine; by RPS6KA5. Ser-25 is modified (ADP-ribosylserine; alternate). Ser-25 bears the Phosphoserine; alternate; by RPS6KA5 mark. Lys-27 carries the post-translational modification N6-acetyllysine. Basic and acidic residues-rich tracts occupy residues 30–50 and 69–85; these read AKVEAKPKKAAAKDKSSDKKV and ETKEDLPAENGETKTEE. At Thr-81 the chain carries Phosphothreonine. Lys-82 bears the N6-acetyllysine mark. 3 positions are modified to phosphoserine: Ser-86, Ser-89, and Ser-99.

Interacts with transcriptional regulator SEHBP. Post-translationally, phosphorylation on Ser-21 and Ser-25 weakens binding to nucleosomes and increases the rate of H3 phosphorylation. Phosphorylation favors cytoplasmic localization.

It is found in the nucleus. It localises to the cytoplasm. Its function is as follows. Binds to the inner side of the nucleosomal DNA thus altering the interaction between the DNA and the histone octamer. May be involved in the process which maintains transcribable genes in a unique chromatin conformation. Inhibits the phosphorylation of nucleosomal histones H3 and H2A by RPS6KA5/MSK1 and RPS6KA3/RSK2. The sequence is that of Non-histone chromosomal protein HMG-14 (HMGN1) from Homo sapiens (Human).